The sequence spans 304 residues: Dihydroorotate dehydrogenase B (NAD(+)), catalytic subunit (304 aa).

Residues serine 21 and 45 to 46 each bind FMN; that span reads KA. Residues lysine 45 and 69 to 73 contribute to the substrate site; that span reads NAIGL. Residues asparagine 99 and asparagine 127 each coordinate FMN. Asparagine 127 serves as a coordination point for substrate. The active-site Nucleophile is cysteine 130. 2 residues coordinate FMN: lysine 165 and isoleucine 191. 192-193 serves as a coordination point for substrate; that stretch reads NT. FMN-binding positions include glycine 217, 243-244, and 265-266; these read GG and GT.

This sequence belongs to the dihydroorotate dehydrogenase family. Type 1 subfamily. Heterotetramer of 2 PyrK and 2 PyrD type B subunits. FMN serves as cofactor.

It is found in the cytoplasm. The enzyme catalyses (S)-dihydroorotate + NAD(+) = orotate + NADH + H(+). It participates in pyrimidine metabolism; UMP biosynthesis via de novo pathway; orotate from (S)-dihydroorotate (NAD(+) route): step 1/1. Functionally, catalyzes the conversion of dihydroorotate to orotate with NAD(+) as electron acceptor. The sequence is that of Dihydroorotate dehydrogenase B (NAD(+)), catalytic subunit (pyrD) from Listeria monocytogenes serotype 4b (strain F2365).